The chain runs to 213 residues: Small ribosomal subunit protein uS3 (213 aa).

Residues 38 to 106 (IRAFVKKLLY…EFSLEVNEIR (69 aa)) enclose the KH type-2 domain.

It belongs to the universal ribosomal protein uS3 family. Part of the 30S ribosomal subunit. Forms a tight complex with proteins S10 and S14.

Functionally, binds the lower part of the 30S subunit head. Binds mRNA in the 70S ribosome, positioning it for translation. The chain is Small ribosomal subunit protein uS3 from Desulfovibrio desulfuricans (strain ATCC 27774 / DSM 6949 / MB).